We begin with the raw amino-acid sequence, 215 residues long: Deoxyribose-phosphate aldolase (215 aa).

Aspartate 89 functions as the Proton donor/acceptor in the catalytic mechanism. Lysine 153 functions as the Schiff-base intermediate with acetaldehyde in the catalytic mechanism. The active-site Proton donor/acceptor is the lysine 182.

This sequence belongs to the DeoC/FbaB aldolase family. DeoC type 1 subfamily.

Its subcellular location is the cytoplasm. The enzyme catalyses 2-deoxy-D-ribose 5-phosphate = D-glyceraldehyde 3-phosphate + acetaldehyde. The protein operates within carbohydrate degradation; 2-deoxy-D-ribose 1-phosphate degradation; D-glyceraldehyde 3-phosphate and acetaldehyde from 2-deoxy-alpha-D-ribose 1-phosphate: step 2/2. In terms of biological role, catalyzes a reversible aldol reaction between acetaldehyde and D-glyceraldehyde 3-phosphate to generate 2-deoxy-D-ribose 5-phosphate. The chain is Deoxyribose-phosphate aldolase from Lactiplantibacillus plantarum (strain ATCC BAA-793 / NCIMB 8826 / WCFS1) (Lactobacillus plantarum).